Reading from the N-terminus, the 233-residue chain is Ribosome maturation factor RimP (233 aa).

Residues 167–179 (RGKAAEREKKRDL) show a composition bias toward basic and acidic residues. Residues 167-233 (RGKAAEREKK…RARRGEIDPD (67 aa)) are disordered. Residues 187-196 (PHAKPAAQAK) are compositionally biased toward low complexity. Positions 220–233 (LAADRARRGEIDPD) are enriched in basic and acidic residues.

Belongs to the RimP family.

The protein resides in the cytoplasm. Functionally, required for maturation of 30S ribosomal subunits. The chain is Ribosome maturation factor RimP from Bradyrhizobium sp. (strain ORS 278).